A 300-amino-acid chain; its full sequence is Estradiol 17-beta-dehydrogenase 11 (300 aa).

A signal peptide spans 1 to 19 (MKFLLDVLLLLPLLIVCSL). 40-64 (LITGAGHGIGRLTAYEFAKLKSKLV) contacts NADP(+). Ser172 contributes to the substrate binding site. The active-site Proton acceptor is Tyr185.

The protein belongs to the short-chain dehydrogenases/reductases (SDR) family. 17-beta-HSD 3 subfamily.

The protein resides in the endoplasmic reticulum. Its subcellular location is the lipid droplet. The enzyme catalyses 17beta-estradiol + NAD(+) = estrone + NADH + H(+). It carries out the reaction 17beta-estradiol + NADP(+) = estrone + NADPH + H(+). Can convert androstan-3-alpha,17-beta-diol (3-alpha-diol) to androsterone in vitro, suggesting that it may participate in androgen metabolism during steroidogenesis. May act by metabolizing compounds that stimulate steroid synthesis and/or by generating metabolites that inhibit it. Has no activity toward DHEA (dehydroepiandrosterone), or A-dione (4-androste-3,17-dione), and only a slight activity toward testosterone to A-dione. The chain is Estradiol 17-beta-dehydrogenase 11 (HSD17B11) from Pongo abelii (Sumatran orangutan).